We begin with the raw amino-acid sequence, 613 residues long: Dihydroxy-acid dehydratase 3 (613 aa).

Mg(2+) is bound at residue D81. Residue C122 participates in [2Fe-2S] cluster binding. D123 and K124 together coordinate Mg(2+). An N6-carboxylysine modification is found at K124. C197 lines the [2Fe-2S] cluster pocket. Position 493 (E493) interacts with Mg(2+). S519 serves as the catalytic Proton acceptor.

The protein belongs to the IlvD/Edd family. As to quaternary structure, homodimer. Requires [2Fe-2S] cluster as cofactor. The cofactor is Mg(2+).

It catalyses the reaction (2R)-2,3-dihydroxy-3-methylbutanoate = 3-methyl-2-oxobutanoate + H2O. The catalysed reaction is (2R,3R)-2,3-dihydroxy-3-methylpentanoate = (S)-3-methyl-2-oxopentanoate + H2O. It functions in the pathway amino-acid biosynthesis; L-isoleucine biosynthesis; L-isoleucine from 2-oxobutanoate: step 3/4. It participates in amino-acid biosynthesis; L-valine biosynthesis; L-valine from pyruvate: step 3/4. Its function is as follows. Functions in the biosynthesis of branched-chain amino acids. Catalyzes the dehydration of (2R,3R)-2,3-dihydroxy-3-methylpentanoate (2,3-dihydroxy-3-methylvalerate) into 2-oxo-3-methylpentanoate (2-oxo-3-methylvalerate) and of (2R)-2,3-dihydroxy-3-methylbutanoate (2,3-dihydroxyisovalerate) into 2-oxo-3-methylbutanoate (2-oxoisovalerate), the penultimate precursor to L-isoleucine and L-valine, respectively. This is Dihydroxy-acid dehydratase 3 from Nocardia farcinica (strain IFM 10152).